The primary structure comprises 556 residues: 2-succinyl-5-enolpyruvyl-6-hydroxy-3-cyclohexene-1-carboxylate synthase (556 aa).

It belongs to the TPP enzyme family. MenD subfamily. As to quaternary structure, homodimer. It depends on Mg(2+) as a cofactor. Requires Mn(2+) as cofactor. Thiamine diphosphate is required as a cofactor.

The catalysed reaction is isochorismate + 2-oxoglutarate + H(+) = 5-enolpyruvoyl-6-hydroxy-2-succinyl-cyclohex-3-ene-1-carboxylate + CO2. It participates in quinol/quinone metabolism; 1,4-dihydroxy-2-naphthoate biosynthesis; 1,4-dihydroxy-2-naphthoate from chorismate: step 2/7. Its pathway is quinol/quinone metabolism; menaquinone biosynthesis. Functionally, catalyzes the thiamine diphosphate-dependent decarboxylation of 2-oxoglutarate and the subsequent addition of the resulting succinic semialdehyde-thiamine pyrophosphate anion to isochorismate to yield 2-succinyl-5-enolpyruvyl-6-hydroxy-3-cyclohexene-1-carboxylate (SEPHCHC). This is 2-succinyl-5-enolpyruvyl-6-hydroxy-3-cyclohexene-1-carboxylate synthase from Shigella flexneri serotype 5b (strain 8401).